Here is a 447-residue protein sequence, read N- to C-terminus: MREILHIQGGQCGNQIGAKFWEVVCDEHGIDPTGRYTGNSDLQLERVNVYYNEASCGRFVPRAVLMDLEPGTMDSVRTGPYGQIFRPDNFVFGQSGAGNNWAKGHYTEGAELIDSVLDVVRKEAENCDCLQGFQVCHSLGGGTGSGMGTLLISKIREEYPDRMMLTFSVFPSPKVSDTVVEPYNATLSVHQLVENADECMVLDNEALYDICFRTLKLTTPSFGDLNHLISATMSGVTCCLRFPGQLNSDLRKLAVNLIPFPRLHFFMVGFAPLTSRGSQQYRALTVPELTQQMWDAKNMMCAADPRHGRYLTASAMFRGKMSTKEVDEQMINVQNKNSSYFVEWIPNNVKSSVCDIPPRGLSMASTFIGNSTSIQEMFRRVSEQFTAMFRRKAFLHWYTGEGMDEMEFTEAESNMNDLVSEYQQYQDATADEEGEYEDEEQQEADDM.

GTP contacts are provided by Q11, E69, S138, G142, T143, G144, N204, and N226. E69 is a binding site for Mg(2+). Positions 423–447 (QQYQDATADEEGEYEDEEQQEADDM) are disordered. Positions 429–447 (TADEEGEYEDEEQQEADDM) are enriched in acidic residues.

The protein belongs to the tubulin family. In terms of assembly, dimer of alpha and beta chains. A typical microtubule is a hollow water-filled tube with an outer diameter of 25 nm and an inner diameter of 15 nM. Alpha-beta heterodimers associate head-to-tail to form protofilaments running lengthwise along the microtubule wall with the beta-tubulin subunit facing the microtubule plus end conferring a structural polarity. Microtubules usually have 13 protofilaments but different protofilament numbers can be found in some organisms and specialized cells. It depends on Mg(2+) as a cofactor. As to expression, expressed in roots and leaf sheaths.

The protein resides in the cytoplasm. The protein localises to the cytoskeleton. In terms of biological role, tubulin is the major constituent of microtubules, a cylinder consisting of laterally associated linear protofilaments composed of alpha- and beta-tubulin heterodimers. Microtubules grow by the addition of GTP-tubulin dimers to the microtubule end, where a stabilizing cap forms. Below the cap, tubulin dimers are in GDP-bound state, owing to GTPase activity of alpha-tubulin. In Oryza sativa subsp. japonica (Rice), this protein is Tubulin beta-4 chain (TUBB4).